The primary structure comprises 321 residues: Ubiquitin-conjugating enzyme E2 U (321 aa).

The UBC core domain maps to 4 to 153; the sequence is RAYLLLHRDF…LRLFNRPLQM (150 aa). Cys-89 acts as the Glycyl thioester intermediate in catalysis. A disordered region spans residues 285–321; it reads WKSDTSLYENDTDEPREEEVEDLISWTNTLNTNTSED. The span at 294-306 shows a compositional bias: acidic residues; it reads NDTDEPREEEVED. Residues 309-321 are compositionally biased toward polar residues; the sequence is SWTNTLNTNTSED.

This sequence belongs to the ubiquitin-conjugating enzyme family. Autoubiquitinated in vitro in the presence of UBR5.

The catalysed reaction is S-ubiquitinyl-[E1 ubiquitin-activating enzyme]-L-cysteine + [E2 ubiquitin-conjugating enzyme]-L-cysteine = [E1 ubiquitin-activating enzyme]-L-cysteine + S-ubiquitinyl-[E2 ubiquitin-conjugating enzyme]-L-cysteine.. It participates in protein modification; protein ubiquitination. Its function is as follows. Catalyzes the covalent attachment of ubiquitin to other proteins. The protein is Ubiquitin-conjugating enzyme E2 U (UBE2U) of Homo sapiens (Human).